The following is a 166-amino-acid chain: CDP-archaeol synthase (166 aa).

5 consecutive transmembrane segments (helical) span residues 1-21 (MPII…LVAN), 55-75 (LLVA…FLGI), 78-98 (IYVS…GAFI), 110-130 (AIGL…IISK), and 131-151 (ISLN…LHIL).

The protein belongs to the CDP-archaeol synthase family. Mg(2+) serves as cofactor.

It localises to the cell membrane. The enzyme catalyses 2,3-bis-O-(geranylgeranyl)-sn-glycerol 1-phosphate + CTP + H(+) = CDP-2,3-bis-O-(geranylgeranyl)-sn-glycerol + diphosphate. It participates in membrane lipid metabolism; glycerophospholipid metabolism. Functionally, catalyzes the formation of CDP-2,3-bis-(O-geranylgeranyl)-sn-glycerol (CDP-archaeol) from 2,3-bis-(O-geranylgeranyl)-sn-glycerol 1-phosphate (DGGGP) and CTP. This reaction is the third ether-bond-formation step in the biosynthesis of archaeal membrane lipids. The protein is CDP-archaeol synthase of Sulfurisphaera tokodaii (strain DSM 16993 / JCM 10545 / NBRC 100140 / 7) (Sulfolobus tokodaii).